Reading from the N-terminus, the 129-residue chain is MKSVQFCFLFCCWRAICCRSCELTNITITVEKEECSFCISINTTWCAGYCYTRDLVYKDPARPNIQKACTFKELVYETVKVPGCARHADSLYTYPVATECHCGKCDRDSTDCTVRGLGPSYCSFSDIRE.

Positions 1–18 (MKSVQFCFLFCCWRAICC) are cleaved as a signal peptide. 6 cysteine pairs are disulfide-bonded: Cys-21–Cys-69, Cys-35–Cys-84, Cys-38–Cys-122, Cys-46–Cys-100, Cys-50–Cys-102, and Cys-105–Cys-112. Residues Asn-25 and Asn-42 are each glycosylated (N-linked (GlcNAc...) asparagine).

It belongs to the glycoprotein hormones subunit beta family. As to quaternary structure, heterodimer. The active follitropin is a heterodimer composed of an alpha chain/CGA shared with other hormones and a unique beta chain/FSHB shown here.

It is found in the secreted. In terms of biological role, together with the alpha chain CGA constitutes follitropin, the follicle-stimulating hormone, and provides its biological specificity to the hormone heterodimer. Binds FSHR, a G protein-coupled receptor, on target cells to activate downstream signaling pathways. Follitropin is involved in follicle development and spermatogenesis in reproductive organs. The chain is Follitropin subunit beta (FSHB) from Capra hircus (Goat).